Here is a 592-residue protein sequence, read N- to C-terminus: Potassium-transporting ATPase potassium-binding subunit (592 aa).

A run of 13 helical transmembrane segments spans residues 6–26, 67–87, 136–156, 179–199, 283–303, 312–332, 359–379, 389–409, 411–431, 450–470, 489–511, 519–539, and 559–579; these read WLET…FGTY, ACAM…MLLL, GFAV…IAAI, LYIL…QGVI, LSNI…TYTF, QGWA…GVFY, FGLA…CGAV, IGGM…GGVG, GLYT…LMIG, ITTV…AMIL, LYAF…GNTL, VAML…AGGL, and FALW…FPAL.

It belongs to the KdpA family. The system is composed of three essential subunits: KdpA, KdpB and KdpC.

The protein resides in the cell inner membrane. Its function is as follows. Part of the high-affinity ATP-driven potassium transport (or Kdp) system, which catalyzes the hydrolysis of ATP coupled with the electrogenic transport of potassium into the cytoplasm. This subunit binds the periplasmic potassium ions and delivers the ions to the membrane domain of KdpB through an intramembrane tunnel. In Geotalea uraniireducens (strain Rf4) (Geobacter uraniireducens), this protein is Potassium-transporting ATPase potassium-binding subunit.